The following is a 412-amino-acid chain: NAD-dependent dihydropyrimidine dehydrogenase subunit PreT (412 aa).

Glutamate 286 is an NAD(+) binding site.

The protein belongs to the NADH dehydrogenase family. Heterotetramer of 2 PreA and 2 PreT subunits.

The catalysed reaction is 5,6-dihydrouracil + NAD(+) = uracil + NADH + H(+). It carries out the reaction 5,6-dihydrothymine + NAD(+) = thymine + NADH + H(+). Functionally, involved in pyrimidine base degradation. Catalyzes physiologically the reduction of uracil to 5,6-dihydrouracil (DHU) by using NADH as a specific cosubstrate. It also catalyzes the reverse reaction and the reduction of thymine to 5,6-dihydrothymine (DHT). This Escherichia coli (strain K12) protein is NAD-dependent dihydropyrimidine dehydrogenase subunit PreT (preT).